A 206-amino-acid polypeptide reads, in one-letter code: Carbonic anhydrase (206 aa).

K11 is covalently cross-linked (Isoglutamyl lysine isopeptide (Lys-Gln) (interchain with Q-Cter in protein Pup)). Zn(2+) is bound by residues C51, D53, H104, and C107.

Belongs to the beta-class carbonic anhydrase family. As to quaternary structure, homotetramer. Zn(2+) is required as a cofactor.

The catalysed reaction is hydrogencarbonate + H(+) = CO2 + H2O. Catalyzes the reversible hydration of carbon dioxide to form bicarbonate. The chain is Carbonic anhydrase (cynT) from Mycolicibacterium smegmatis (strain ATCC 700084 / mc(2)155) (Mycobacterium smegmatis).